The sequence spans 419 residues: Phospho-N-acetylmuramoyl-pentapeptide-transferase (419 aa).

10 helical membrane-spanning segments follow: residues 22-42 (YVSF…TVIG), 72-92 (TPTM…LLLA), 99-119 (ILLM…DDYI), 135-155 (IIGQ…NPAV), 208-228 (VLFG…FISN), 238-258 (GLAT…AYVS), 278-298 (LTIF…YNAY), 303-323 (FMGD…ALII), 328-348 (LLPI…IQVF), and 396-416 (KITV…IATL).

The protein belongs to the glycosyltransferase 4 family. MraY subfamily. The cofactor is Mg(2+).

The protein resides in the cell inner membrane. It carries out the reaction UDP-N-acetyl-alpha-D-muramoyl-L-alanyl-gamma-D-glutamyl-meso-2,6-diaminopimeloyl-D-alanyl-D-alanine + di-trans,octa-cis-undecaprenyl phosphate = di-trans,octa-cis-undecaprenyl diphospho-N-acetyl-alpha-D-muramoyl-L-alanyl-D-glutamyl-meso-2,6-diaminopimeloyl-D-alanyl-D-alanine + UMP. It functions in the pathway cell wall biogenesis; peptidoglycan biosynthesis. In terms of biological role, catalyzes the initial step of the lipid cycle reactions in the biosynthesis of the cell wall peptidoglycan: transfers peptidoglycan precursor phospho-MurNAc-pentapeptide from UDP-MurNAc-pentapeptide onto the lipid carrier undecaprenyl phosphate, yielding undecaprenyl-pyrophosphoryl-MurNAc-pentapeptide, known as lipid I. This chain is Phospho-N-acetylmuramoyl-pentapeptide-transferase, found in Porphyromonas gingivalis (strain ATCC BAA-308 / W83).